A 654-amino-acid polypeptide reads, in one-letter code: Fructose-1,6-bisphosphatase class 3 (654 aa).

Residues 288 to 307 form a disordered region; that stretch reads NPAFKPKKRPDKHERLTQRE. The span at 298-307 shows a compositional bias: basic and acidic residues; that stretch reads DKHERLTQRE.

The protein belongs to the FBPase class 3 family. It depends on Mn(2+) as a cofactor.

It carries out the reaction beta-D-fructose 1,6-bisphosphate + H2O = beta-D-fructose 6-phosphate + phosphate. Its pathway is carbohydrate biosynthesis; gluconeogenesis. In Staphylococcus aureus (strain USA300), this protein is Fructose-1,6-bisphosphatase class 3.